Here is an 88-residue protein sequence, read N- to C-terminus: Small ribosomal subunit protein bS16 (88 aa).

Belongs to the bacterial ribosomal protein bS16 family.

The polypeptide is Small ribosomal subunit protein bS16 (Mycoplasmopsis pulmonis (strain UAB CTIP) (Mycoplasma pulmonis)).